A 126-amino-acid chain; its full sequence is Protein ApaG (126 aa).

The ApaG domain maps to 2–126; that stretch reads SDPRYQVDVS…FRLAVPGALH (125 aa).

The chain is Protein ApaG from Pseudomonas fluorescens (strain Pf0-1).